Here is a 146-residue protein sequence, read N- to C-terminus: Large ribosomal subunit protein bL21 (146 aa).

A disordered region spans residues 115–146 (KSISLGKSAPKSSAKKETVKKETKPKSEKSTN). Positions 128 to 146 (AKKETVKKETKPKSEKSTN) are enriched in basic and acidic residues.

Belongs to the bacterial ribosomal protein bL21 family. As to quaternary structure, part of the 50S ribosomal subunit. Contacts protein L20.

Its function is as follows. This protein binds to 23S rRNA in the presence of protein L20. The polypeptide is Large ribosomal subunit protein bL21 (Prochlorococcus marinus (strain MIT 9312)).